A 233-amino-acid polypeptide reads, in one-letter code: Ribose-5-phosphate isomerase A (233 aa).

Substrate contacts are provided by residues 28-31, 85-88, and 98-101; these read TGST, DGAD, and KGLG. E107 serves as the catalytic Proton acceptor. K125 provides a ligand contact to substrate.

The protein belongs to the ribose 5-phosphate isomerase family. As to quaternary structure, homodimer.

The catalysed reaction is aldehydo-D-ribose 5-phosphate = D-ribulose 5-phosphate. Its pathway is carbohydrate degradation; pentose phosphate pathway; D-ribose 5-phosphate from D-ribulose 5-phosphate (non-oxidative stage): step 1/1. Catalyzes the reversible conversion of ribose-5-phosphate to ribulose 5-phosphate. The protein is Ribose-5-phosphate isomerase A of Roseiflexus sp. (strain RS-1).